The sequence spans 305 residues: Dihydroorotate dehydrogenase B (NAD(+)), catalytic subunit (305 aa).

FMN is bound by residues S23 and 47 to 48 (KG). Residues K47 and 71 to 75 (NAIGL) contribute to the substrate site. Positions 101 and 129 each coordinate FMN. A substrate-binding site is contributed by N129. The active-site Nucleophile is C132. Residues K167 and I193 each contribute to the FMN site. A substrate-binding site is contributed by 194–195 (NT). FMN-binding positions include G219, 245–246 (GG), and 267–268 (GT).

Belongs to the dihydroorotate dehydrogenase family. Type 1 subfamily. Heterotetramer of 2 PyrK and 2 PyrD type B subunits. The cofactor is FMN.

It is found in the cytoplasm. The enzyme catalyses (S)-dihydroorotate + NAD(+) = orotate + NADH + H(+). It functions in the pathway pyrimidine metabolism; UMP biosynthesis via de novo pathway; orotate from (S)-dihydroorotate (NAD(+) route): step 1/1. Its function is as follows. Catalyzes the conversion of dihydroorotate to orotate with NAD(+) as electron acceptor. The sequence is that of Dihydroorotate dehydrogenase B (NAD(+)), catalytic subunit (pyrD) from Geotalea uraniireducens (strain Rf4) (Geobacter uraniireducens).